The following is a 381-amino-acid chain: Chaperone protein DnaJ (381 aa).

A J domain is found at 5–70; that stretch reads DFYEVLGVGR…QKKAAYDQYG (66 aa). Residues 136–214 form a CR-type zinc finger; that stretch reads GVSKEIEVPT…CHGQGRKQKT (79 aa). Residues cysteine 149, cysteine 152, cysteine 166, cysteine 169, cysteine 188, cysteine 191, cysteine 202, and cysteine 205 each contribute to the Zn(2+) site. 4 CXXCXGXG motif repeats span residues 149-156, 166-173, 188-195, and 202-209; these read CDTCDGSG, CGTCHGHG, CPTCHGKG, and CNECHGQG.

The protein belongs to the DnaJ family. Homodimer. It depends on Zn(2+) as a cofactor.

It localises to the cytoplasm. In terms of biological role, participates actively in the response to hyperosmotic and heat shock by preventing the aggregation of stress-denatured proteins and by disaggregating proteins, also in an autonomous, DnaK-independent fashion. Unfolded proteins bind initially to DnaJ; upon interaction with the DnaJ-bound protein, DnaK hydrolyzes its bound ATP, resulting in the formation of a stable complex. GrpE releases ADP from DnaK; ATP binding to DnaK triggers the release of the substrate protein, thus completing the reaction cycle. Several rounds of ATP-dependent interactions between DnaJ, DnaK and GrpE are required for fully efficient folding. Also involved, together with DnaK and GrpE, in the DNA replication of plasmids through activation of initiation proteins. The chain is Chaperone protein DnaJ from Vibrio campbellii (strain ATCC BAA-1116).